The following is a 193-amino-acid chain: 3-isopropylmalate dehydratase small subunit (193 aa).

The protein belongs to the LeuD family. LeuD type 1 subfamily. In terms of assembly, heterodimer of LeuC and LeuD.

It carries out the reaction (2R,3S)-3-isopropylmalate = (2S)-2-isopropylmalate. It functions in the pathway amino-acid biosynthesis; L-leucine biosynthesis; L-leucine from 3-methyl-2-oxobutanoate: step 2/4. Catalyzes the isomerization between 2-isopropylmalate and 3-isopropylmalate, via the formation of 2-isopropylmaleate. In Bacillus cereus (strain ZK / E33L), this protein is 3-isopropylmalate dehydratase small subunit.